We begin with the raw amino-acid sequence, 559 residues long: DNA ligase (559 aa).

Residue Glu-247 participates in ATP binding. The active-site N6-AMP-lysine intermediate is the Lys-249. Arg-254, Arg-269, Glu-299, Phe-339, Arg-414, and Lys-420 together coordinate ATP.

The protein belongs to the ATP-dependent DNA ligase family. Mg(2+) serves as cofactor.

The catalysed reaction is ATP + (deoxyribonucleotide)n-3'-hydroxyl + 5'-phospho-(deoxyribonucleotide)m = (deoxyribonucleotide)n+m + AMP + diphosphate.. In terms of biological role, DNA ligase that seals nicks in double-stranded DNA during DNA replication, DNA recombination and DNA repair. The sequence is that of DNA ligase from Pyrococcus abyssi (strain GE5 / Orsay).